Consider the following 161-residue polypeptide: Cytochrome c-type biogenesis protein CcmE (161 aa).

Topologically, residues 1–8 (MNPRRKKR) are cytoplasmic. Residues 9 to 29 (LGLILALFVGISATVGLMLYA) form a helical; Signal-anchor for type II membrane protein membrane-spanning segment. Over 30–161 (LNQNMDLFYT…TEQQKQGTGQ (132 aa)) the chain is Periplasmic. The heme site is built by histidine 129 and tyrosine 133. The disordered stretch occupies residues 142-161 (MKKTHEPLQYTEQQKQGTGQ). Residues 151 to 161 (YTEQQKQGTGQ) are compositionally biased toward polar residues.

Belongs to the CcmE/CycJ family.

The protein resides in the cell inner membrane. Heme chaperone required for the biogenesis of c-type cytochromes. Transiently binds heme delivered by CcmC and transfers the heme to apo-cytochromes in a process facilitated by CcmF and CcmH. This chain is Cytochrome c-type biogenesis protein CcmE, found in Aliivibrio fischeri (strain MJ11) (Vibrio fischeri).